Here is a 216-residue protein sequence, read N- to C-terminus: Putative cat eye syndrome critical region protein 9 (216 aa).

The signal sequence occupies residues 1 to 23; that stretch reads MQSHLAPLACAAAAGRAGGSCQA. Asn-148 carries N-linked (GlcNAc...) asparagine glycosylation.

Ubiquitously expressed with higher expression in heart.

Its subcellular location is the secreted. This chain is Putative cat eye syndrome critical region protein 9 (CECR9), found in Homo sapiens (Human).